A 159-amino-acid chain; its full sequence is Large ribosomal subunit protein eL24 (159 aa).

A disordered region spans residues 118–159 (ANKAVRAAKAAANKEKKASQPKTQQKTAKNVKTAAPRVGGKR). Polar residues predominate over residues 137 to 147 (QPKTQQKTAKN).

This sequence belongs to the eukaryotic ribosomal protein eL24 family.

The protein is Large ribosomal subunit protein eL24 of Caenorhabditis elegans.